The chain runs to 264 residues: Virulence plasmid protein pGP3-D (264 aa).

The polypeptide is Virulence plasmid protein pGP3-D (Chlamydia trachomatis serovar L2 (strain ATCC VR-902B / DSM 19102 / 434/Bu)).